The following is a 560-amino-acid chain: Formate--tetrahydrofolate ligase (560 aa).

69-76 contacts ATP; that stretch reads TPAGEGKS.

This sequence belongs to the formate--tetrahydrofolate ligase family.

The catalysed reaction is (6S)-5,6,7,8-tetrahydrofolate + formate + ATP = (6R)-10-formyltetrahydrofolate + ADP + phosphate. Its pathway is one-carbon metabolism; tetrahydrofolate interconversion. The polypeptide is Formate--tetrahydrofolate ligase (Listeria monocytogenes serotype 4b (strain CLIP80459)).